Here is a 41-residue protein sequence, read N- to C-terminus: uncharacterized protein (41 aa).

The segment at Asn-19–Leu-41 is disordered.

This is an uncharacterized protein from Dictyostelium discoideum (Social amoeba).